The chain runs to 139 residues: Large ribosomal subunit protein bL17 (139 aa).

This sequence belongs to the bacterial ribosomal protein bL17 family. Part of the 50S ribosomal subunit. Contacts protein L32.

The sequence is that of Large ribosomal subunit protein bL17 from Myxococcus xanthus (strain DK1622).